The chain runs to 401 residues: MSALITHDRSTPVTGSLVPYIETPAPAPLQTQQVAGELKDKNGGVSSQGVQLPAPLAVVASQVTEGQQQEITKLLESVTRGTAGSQLISNYVSVLTNFTLASPDTFEIELGKLVSNLEEVRKDIKIADIQRLHEQNMKKIEENQEKIKETEENAKQVKKSGMASKIFGWLIAIASVVIGAIMVASGVGAVAGAMMIASGVIGMANMAVKQAAEDGLISQEAMQVLGPILTAIEVALTVVSTVMTFGGSALKCLADIGAKLGANTASLAAKGAEFSAKVAQISTGISNTVGSAVTKLGGSFGSLTMSHVIRTGSQATQVAVGVGSGITQTINNKKQADLQHNNADLALNKADMAALQSIIDRLKEELSHLSESHRQVMELIFQMINAKGDMLHNLAGRPHTV.

Positions 129 to 160 (IQRLHEQNMKKIEENQEKIKETEENAKQVKKS) form a coiled coil. The next 2 membrane-spanning stretches (helical) occupy residues 166–186 (IFGWLIAIASVVIGAIMVASG) and 225–245 (LGPILTAIEVALTVVSTVMTF). A coiled-coil region spans residues 345–379 (LALNKADMAALQSIIDRLKEELSHLSESHRQVMEL).

The protein belongs to the SctE/SipB/YopB family. The core secretion machinery of the T3SS is composed of approximately 20 different proteins, including cytoplasmic components, a base, an export apparatus and a needle. This subunit is involved in the formation of a pore, called the translocon, in host membrane. Interacts with YopD/SctB. Together with YopD/SctB, forms a multimeric integral membrane complex with a mass of between 500 and 700 kDa.

Its subcellular location is the secreted. It is found in the host membrane. Component of the type III secretion system (T3SS), also called injectisome, which is used to inject bacterial effector proteins into eukaryotic host cells. YopB/SctE and YopD/SctB are inserted into the host membrane where they form a pore and allow the translocation of effector proteins into the cytosol of target cells. Is an essential virulence determinant. Required for YopE translocation. Functionally, essential for the establishment of Yersinia infections in a mouse model system, but not for the targeting of effector Yops. May modulate the host's immune response at a distance from the site of infection. The protein is Type 3 secretion system translocon protein SctE of Yersinia enterocolitica.